An 863-amino-acid polypeptide reads, in one-letter code: Glycerol-3-phosphate acyltransferase (863 aa).

Residues 1 to 29 form a disordered region; sequence MPKKNSPLLPKETTTTQSSVDTSGSSNLT. The span at 12-29 shows a compositional bias: polar residues; that stretch reads ETTTTQSSVDTSGSSNLT. Positions 343-348 match the HXXXXD motif motif; sequence SHRSHM.

Belongs to the GPAT/DAPAT family.

The protein resides in the cell inner membrane. The enzyme catalyses sn-glycerol 3-phosphate + an acyl-CoA = a 1-acyl-sn-glycero-3-phosphate + CoA. The protein operates within phospholipid metabolism; CDP-diacylglycerol biosynthesis; CDP-diacylglycerol from sn-glycerol 3-phosphate: step 1/3. The chain is Glycerol-3-phosphate acyltransferase from Xylella fastidiosa (strain M23).